We begin with the raw amino-acid sequence, 117 residues long: Large ribosomal subunit protein uL18 (117 aa).

It belongs to the universal ribosomal protein uL18 family. As to quaternary structure, part of the 50S ribosomal subunit; part of the 5S rRNA/L5/L18/L25 subcomplex. Contacts the 5S and 23S rRNAs.

Functionally, this is one of the proteins that bind and probably mediate the attachment of the 5S RNA into the large ribosomal subunit, where it forms part of the central protuberance. This is Large ribosomal subunit protein uL18 from Aliivibrio salmonicida (strain LFI1238) (Vibrio salmonicida (strain LFI1238)).